A 533-amino-acid chain; its full sequence is Methyl-accepting chemotaxis protein IV (533 aa).

The Cytoplasmic portion of the chain corresponds to 1–6; that stretch reads MFNRIR. A helical transmembrane segment spans residues 7–33; sequence ISTTLFLILILCGILQIGSNGMSFWAF. Over 34–188 the chain is Periplasmic; that stretch reads RDDLQRLNQV…AQSQRNYQIS (155 aa). A helical membrane pass occupies residues 189-209; sequence ALVFISMIIVAAIYISSALWW. The Cytoplasmic portion of the chain corresponds to 210–533; that stretch reads TRKMIVQPLA…VQLQIAPVVS (324 aa). An HAMP domain is found at 212 to 264; sequence KMIVQPLAIIGSHFDSIAAGNLARPIAVYGRNEITAIFASLKTMQQALRGTVS. The region spanning 269-498 is the Methyl-accepting transducer domain; the sequence is GSQEMHIGIA…EAAVATEQLA (230 aa). Glutamate methyl ester (Gln) is present on residues Gln-293, Gln-300, and Gln-307. Glu-489 bears the Glutamate methyl ester (Glu) mark.

The protein belongs to the methyl-accepting chemotaxis (MCP) protein family.

The protein resides in the cell inner membrane. Functionally, mediates taxis toward dipeptides via an interaction with the periplasmic dipeptide-binding protein. Its function is as follows. Chemotactic-signal transducers respond to changes in the concentration of attractants and repellents in the environment, transduce a signal from the outside to the inside of the cell, and facilitate sensory adaptation through the variation of the level of methylation. Attractants increase the level of methylation while repellents decrease the level of methylation, the methyl groups are added by the methyltransferase CheR and removed by the methylesterase CheB. This Escherichia coli (strain K12) protein is Methyl-accepting chemotaxis protein IV (tap).